The following is a 300-amino-acid chain: N-acetylmuramic acid 6-phosphate etherase 2 (300 aa).

The SIS domain maps to 57 to 220 (ITAAFANGGR…TTGAMIRSGK (164 aa)). Residue glutamate 85 is the Proton donor of the active site. Residue glutamate 116 is part of the active site.

Belongs to the GCKR-like family. MurNAc-6-P etherase subfamily. In terms of assembly, homodimer.

The catalysed reaction is N-acetyl-D-muramate 6-phosphate + H2O = N-acetyl-D-glucosamine 6-phosphate + (R)-lactate. Its pathway is amino-sugar metabolism; 1,6-anhydro-N-acetylmuramate degradation. It functions in the pathway amino-sugar metabolism; N-acetylmuramate degradation. The protein operates within cell wall biogenesis; peptidoglycan recycling. Specifically catalyzes the cleavage of the D-lactyl ether substituent of MurNAc 6-phosphate, producing GlcNAc 6-phosphate and D-lactate. Together with AnmK, is also required for the utilization of anhydro-N-acetylmuramic acid (anhMurNAc) either imported from the medium or derived from its own cell wall murein, and thus plays a role in cell wall recycling. This Vibrio parahaemolyticus serotype O3:K6 (strain RIMD 2210633) protein is N-acetylmuramic acid 6-phosphate etherase 2.